The primary structure comprises 107 residues: Phosphoribosyl-ATP pyrophosphatase (107 aa).

It belongs to the PRA-PH family.

The protein localises to the cytoplasm. It carries out the reaction 1-(5-phospho-beta-D-ribosyl)-ATP + H2O = 1-(5-phospho-beta-D-ribosyl)-5'-AMP + diphosphate + H(+). The protein operates within amino-acid biosynthesis; L-histidine biosynthesis; L-histidine from 5-phospho-alpha-D-ribose 1-diphosphate: step 2/9. The chain is Phosphoribosyl-ATP pyrophosphatase from Methylobacterium radiotolerans (strain ATCC 27329 / DSM 1819 / JCM 2831 / NBRC 15690 / NCIMB 10815 / 0-1).